The following is a 433-amino-acid chain: Adenylosuccinate synthetase (433 aa).

Residues 11–17 (GDEGKGK) and 39–41 (GHT) contribute to the GTP site. The active-site Proton acceptor is the aspartate 12. Residues aspartate 12 and glycine 39 each coordinate Mg(2+). IMP is bound by residues 12-15 (DEGK), 37-40 (NAGH), threonine 134, arginine 148, asparagine 230, threonine 245, and arginine 309. Residue histidine 40 is the Proton donor of the active site. 305-311 (VTTGRKR) serves as a coordination point for substrate. Residues arginine 311, 337 to 339 (KLD), and 419 to 421 (GTG) each bind GTP.

The protein belongs to the adenylosuccinate synthetase family. Homodimer. The cofactor is Mg(2+).

It localises to the cytoplasm. The enzyme catalyses IMP + L-aspartate + GTP = N(6)-(1,2-dicarboxyethyl)-AMP + GDP + phosphate + 2 H(+). Its pathway is purine metabolism; AMP biosynthesis via de novo pathway; AMP from IMP: step 1/2. Functionally, plays an important role in the de novo pathway and in the salvage pathway of purine nucleotide biosynthesis. Catalyzes the first committed step in the biosynthesis of AMP from IMP. This Saccharomyces cerevisiae (strain Lalvin EC1118 / Prise de mousse) (Baker's yeast) protein is Adenylosuccinate synthetase.